Reading from the N-terminus, the 232-residue chain is Protein G1-like3 (232 aa).

Disordered regions lie at residues 20 to 77 and 189 to 232; these read AGLL…YEAQ and ARAR…GAAC. The span at 38–53 shows a compositional bias: gly residues; the sequence is AGGGGGGGGDGAGGSS. Residues 73-200 enclose the ALOG domain; it reads RYEAQKRRDW…ARGVSYEKKK (128 aa). The short motif at 198 to 202 is the Nuclear localization signal element; the sequence is KKKRK. The span at 216–232 shows a compositional bias: pro residues; sequence PHPPPPPPPPPSAGAAC.

Belongs to the plant homeotic and developmental regulators ALOG protein family.

The protein localises to the nucleus. In terms of biological role, probable transcription regulator that acts as a developmental regulator by promoting cell growth in response to light. The protein is Protein G1-like3 of Oryza sativa subsp. indica (Rice).